Here is a 571-residue protein sequence, read N- to C-terminus: Proline--tRNA ligase (571 aa).

Belongs to the class-II aminoacyl-tRNA synthetase family. ProS type 1 subfamily. In terms of assembly, homodimer.

The protein localises to the cytoplasm. The enzyme catalyses tRNA(Pro) + L-proline + ATP = L-prolyl-tRNA(Pro) + AMP + diphosphate. Catalyzes the attachment of proline to tRNA(Pro) in a two-step reaction: proline is first activated by ATP to form Pro-AMP and then transferred to the acceptor end of tRNA(Pro). As ProRS can inadvertently accommodate and process non-cognate amino acids such as alanine and cysteine, to avoid such errors it has two additional distinct editing activities against alanine. One activity is designated as 'pretransfer' editing and involves the tRNA(Pro)-independent hydrolysis of activated Ala-AMP. The other activity is designated 'posttransfer' editing and involves deacylation of mischarged Ala-tRNA(Pro). The misacylated Cys-tRNA(Pro) is not edited by ProRS. In Vibrio vulnificus (strain CMCP6), this protein is Proline--tRNA ligase.